A 317-amino-acid chain; its full sequence is tRNA dimethylallyltransferase (317 aa).

14-21 (GPTASGKS) is a binding site for ATP. 16 to 21 (TASGKS) is a substrate binding site. Interaction with substrate tRNA regions lie at residues 39–42 (DSVL) and 163–167 (QRIQR).

It belongs to the IPP transferase family. In terms of assembly, monomer. The cofactor is Mg(2+).

It carries out the reaction adenosine(37) in tRNA + dimethylallyl diphosphate = N(6)-dimethylallyladenosine(37) in tRNA + diphosphate. In terms of biological role, catalyzes the transfer of a dimethylallyl group onto the adenine at position 37 in tRNAs that read codons beginning with uridine, leading to the formation of N6-(dimethylallyl)adenosine (i(6)A). In Xylella fastidiosa (strain M12), this protein is tRNA dimethylallyltransferase.